A 292-amino-acid polypeptide reads, in one-letter code: MSMPATSTKTTKLATSLIDEYALLGWRAMLTEVNLSPKPGLVDRINCGAHKDMALEDFHRSALAIQGWLPRFIEFGACSAEMAPEAVLHGLRPIGMACEGDMFRATAGVNTHKGSIFSLGLLCAAIGRLLQLNQPVTPTTVCSTAASFCRGLTDRELRTNNSQLTAGQRLYQQLGLTGARGEAEAGYPLVINHALPHYLTLLDQGLDPELALLDTLLLLMAINGDTNVASRGGEGGLRWLQREAQTLLQKGGIRTPADLDYLRQFDRECIERNLSPGGSADLLILTWFLAQI.

It belongs to the CitG/MdcB family.

It carries out the reaction 3'-dephospho-CoA + ATP = 2'-(5''-triphospho-alpha-D-ribosyl)-3'-dephospho-CoA + adenine. Catalyzes the formation of 2-(5''-triphosphoribosyl)-3'-dephosphocoenzyme-A, the precursor of the prosthetic group of the holo-acyl carrier protein (gamma chain) of citrate lyase, from ATP and dephospho-CoA. This is 2-(5''-triphosphoribosyl)-3'-dephosphocoenzyme-A synthase from Escherichia coli (strain ATCC 8739 / DSM 1576 / NBRC 3972 / NCIMB 8545 / WDCM 00012 / Crooks).